We begin with the raw amino-acid sequence, 644 residues long: Exoribonuclease 2 (644 aa).

Positions 189–516 (RQDLTALNFV…NHRLLKAVIK (328 aa)) constitute an RNB domain. Residues 561 to 643 (NTRFAAEIID…ETRSIIARPA (83 aa)) enclose the S1 motif domain.

Belongs to the RNR ribonuclease family. RNase II subfamily.

It is found in the cytoplasm. It carries out the reaction Exonucleolytic cleavage in the 3'- to 5'-direction to yield nucleoside 5'-phosphates.. Functionally, involved in mRNA degradation. Hydrolyzes single-stranded polyribonucleotides processively in the 3' to 5' direction. This is Exoribonuclease 2 from Salmonella enteritidis PT4 (strain P125109).